Reading from the N-terminus, the 587-residue chain is Formate--tetrahydrofolate ligase (587 aa).

73–80 (TPLGEGKS) is a binding site for ATP.

This sequence belongs to the formate--tetrahydrofolate ligase family.

It carries out the reaction (6S)-5,6,7,8-tetrahydrofolate + formate + ATP = (6R)-10-formyltetrahydrofolate + ADP + phosphate. It functions in the pathway one-carbon metabolism; tetrahydrofolate interconversion. The polypeptide is Formate--tetrahydrofolate ligase (Desulfosudis oleivorans (strain DSM 6200 / JCM 39069 / Hxd3) (Desulfococcus oleovorans)).